The chain runs to 355 residues: Epoxide hydrolase 2 (355 aa).

The region spanning 78–323 (VLLMVHGFPE…IRGASHWVQQ (246 aa)) is the AB hydrolase-1 domain. D152 acts as the Nucleophile in catalysis. Residue Y263 is the Proton donor of the active site. H319 (proton acceptor) is an active-site residue.

The protein belongs to the AB hydrolase superfamily. Epoxide hydrolase family.

It catalyses the reaction an epoxide + H2O = an ethanediol. It participates in lipid metabolism. Functionally, catalyzes the hydrolysis of epoxide-containing fatty acids. Active in vitro against trans-1,3-diphenylpropene oxide (t-DPPO), epoxyeicosatrienoic acids (EETs) including 8,9-EET, 11,12-EET and 14,15-EET and the linoleic acid metabolites 12,13-epoxy-9-octadecenoate (12,13-EpOME) and 9,10-epoxy-12-octadecenoate (9,10-EpOME). This Caenorhabditis elegans protein is Epoxide hydrolase 2.